Consider the following 459-residue polypeptide: DnaJ homolog subfamily A member 1 homolog (459 aa).

Positions 6 to 73 (EYYERLGVKP…EKRKMYDSYG (68 aa)) constitute a J domain. The CR-type zinc finger occupies 158–243 (GKLVKISISR…CKGKRVIQGK (86 aa)). 8 residues coordinate Zn(2+): C171, C174, C188, C191, C215, C218, C231, and C234. 4 CXXCXGXG motif repeats span residues 171 to 178 (CKTCKGSG), 188 to 195 (CPTCNGSR), 215 to 222 (CHTCHGTG), and 231 to 238 (CKECKGKR). Residues 405-459 (NTNEQSSHGGAGGAYQQHGGAYGHQKQQQQGFNPADFGAQFGGGGPQQAQQCQQQ) form a disordered region. Residues 418-435 (AYQQHGGAYGHQKQQQQG) show a composition bias toward low complexity. C456 carries the post-translational modification Cysteine methyl ester. C456 carries S-farnesyl cysteine lipidation. Residues 457 to 459 (QQQ) constitute a propeptide, removed in mature form.

Its subcellular location is the membrane. It is found in the cytoplasm. The protein localises to the microsome. It localises to the mitochondrion. The protein resides in the nucleus. Its subcellular location is the perinuclear region. In terms of biological role, co-chaperone for Hsp70 family members. Plays a role in protein transport into mitochondria and in the regulation of apoptosis via its role as co-chaperone. This Dictyostelium discoideum (Social amoeba) protein is DnaJ homolog subfamily A member 1 homolog (dnaja1).